The primary structure comprises 187 residues: Tetratricopeptide repeat protein 36 (187 aa).

TPR repeat units lie at residues 47–80 (VKDL…LPQR), 82–114 (SAYN…SNGK), and 119–152 (CQAL…GSEF).

Belongs to the TTC36 family.

The protein is Tetratricopeptide repeat protein 36 (ttc36) of Danio rerio (Zebrafish).